The chain runs to 347 residues: S-adenosylmethionine:tRNA ribosyltransferase-isomerase (347 aa).

It belongs to the QueA family. As to quaternary structure, monomer.

It is found in the cytoplasm. The enzyme catalyses 7-aminomethyl-7-carbaguanosine(34) in tRNA + S-adenosyl-L-methionine = epoxyqueuosine(34) in tRNA + adenine + L-methionine + 2 H(+). Its pathway is tRNA modification; tRNA-queuosine biosynthesis. Its function is as follows. Transfers and isomerizes the ribose moiety from AdoMet to the 7-aminomethyl group of 7-deazaguanine (preQ1-tRNA) to give epoxyqueuosine (oQ-tRNA). The chain is S-adenosylmethionine:tRNA ribosyltransferase-isomerase from Pseudomonas paraeruginosa (strain DSM 24068 / PA7) (Pseudomonas aeruginosa (strain PA7)).